A 526-amino-acid polypeptide reads, in one-letter code: Delayed-rectifier potassium channel regulatory subunit KCNS1 (526 aa).

At 1–217 the chain is on the cytoplasmic side; that stretch reads MLMLLVRGTH…LTMENPGYSL (217 aa). The helical transmembrane segment at 218-239 threads the bilayer; sequence PSKLFSCVSISVVLASIAAMCI. Residues 240–270 are Extracellular-facing; sequence HSLPEYQAREAAAAVAAVAAGRSPEGVRDDP. Residues 271–293 traverse the membrane as a helical segment; that stretch reads VLRRLEYFCIAWFSFEVSSRLLL. Over 294-304 the chain is Cytoplasmic; the sequence is APSTRNFFCHP. The chain crosses the membrane as a helical span at residues 305–322; that stretch reads LNLIDIVSVLPFYLTLLA. Over 323–337 the chain is Extracellular; that stretch reads GVALGDQGGKEFGHL. The helical; Voltage-sensor transmembrane segment at 338–358 threads the bilayer; the sequence is GKVVQVFRLMRIFRVLKLARH. At 359–373 the chain is on the cytoplasmic side; that stretch reads STGLRSLGATLKHSY. Residues 374–395 traverse the membrane as a helical segment; sequence REVGILLLYLAVGVSVFSGVAY. The Extracellular segment spans residues 396–408; that stretch reads TAEKEEDVGFNTI. Positions 409-420 form an intramembrane region, helical; it reads PACWWWGTVSMT. Residues 421–426 carry the Selectivity filter motif; the sequence is TVGYGD. Residues 421–428 lie within the membrane without spanning it; it reads TVGYGDVV. The Extracellular segment spans residues 429–435; sequence PVTVAGK. Residues 436–464 traverse the membrane as a helical segment; sequence LAASGCILGGILVVALPITIIFNKFSHFY. Residues 465–526 are Cytoplasmic-facing; the sequence is RRQKALEAAV…PSEPPHPQMY (62 aa). Residues 491 to 526 form a disordered region; the sequence is GVSEASLETSRETSQEGRSADLESQAPSEPPHPQMY. Over residues 499-511 the composition is skewed to basic and acidic residues; that stretch reads TSRETSQEGRSAD.

This sequence belongs to the potassium channel family. S (TC 1.A.1.2) subfamily. Kv9.1/KCNS1 sub-subfamily. In terms of assembly, heterotetramer with KCNB1. Heterotetramer with KCNB2. Does not form homomultimers.

The protein localises to the cell membrane. Its function is as follows. Potassium channel regulatory subunit that modulate the delayed rectifier voltage-gated potassium channel activity of KCNB1 and KCNB2 by altering their kinetics, expression levels, and shifting the half-inactivation potential to more polarized values. While it does not form functional channels on its own, it can form functional heterotetrameric channels with KCNB1 and KCNB2. Each regulatory subunit has unique regulatory properties that can lead to extensive inhibition, significant changes in kinetics, and/or substantial shifts in the voltage dependencies of the inactivation process. In Pongo abelii (Sumatran orangutan), this protein is Delayed-rectifier potassium channel regulatory subunit KCNS1.